Consider the following 141-residue polypeptide: Large ribosomal subunit protein uL16m (141 aa).

The protein belongs to the universal ribosomal protein uL16 family.

The protein localises to the mitochondrion. This chain is Large ribosomal subunit protein uL16m (RPL16), found in Acanthamoeba castellanii (Amoeba).